The chain runs to 602 residues: Bifunctional xylanase/deacetylase (602 aa).

An N-terminal signal peptide occupies residues 1 to 14 (MSATLLVPSMTVKA). The region spanning 17–211 (TIYNNKTGNQ…SSGSASVYKN (195 aa)) is the GH11 domain. The active-site Nucleophile is the Glu108. Residue Glu198 is the Proton donor of the active site. Residues 216-240 (GGSSSSSGNQGGNQGGNTGNENAGN) are disordered. Residues 224–233 (NQGGNQGGNT) are compositionally biased toward gly residues. The CBM6 domain maps to 249-366 (DKIQCETMTK…DAYLDYFNNS (118 aa)). The NodB homology domain occupies 402 to 578 (KLIALTFDDG…GLKNQGYTFV (177 aa)).

It belongs to the glycosyl hydrolase 11 (cellulase G) family. Post-translationally, in the later growth phases, seems to undergo a proteolytic cleavage into a 30 kDa protein possessing xylanolytic activity.

The protein resides in the secreted. The enzyme catalyses Endohydrolysis of (1-&gt;4)-beta-D-xylosidic linkages in xylans.. It participates in glycan degradation; xylan degradation. Functionally, endo-acting xylanase which specifically cleaves internal linkages on the xylan backbone, releasing xylooligosaccharides. Is also probably able, via its C-terminal domain, to remove acetyl groups from acetylated xylan, and thus it is probably capable of hydrolyzing acetylated xylan. The protein is Bifunctional xylanase/deacetylase (xyn11A) of Pseudobutyrivibrio xylanivorans.